The chain runs to 121 residues: Chorion protein S15 (121 aa).

The N-terminal stretch at 1–18 is a signal peptide; the sequence is MKYLFVCVSLALFAYISA.

It belongs to the chorion protein S15/S18 family.

The protein resides in the secreted. Its function is as follows. Chorion membrane (egg shell) protein; plays a role in protecting the egg from the environment. This is Chorion protein S15 (Cp15) from Drosophila subobscura (Fruit fly).